An 857-amino-acid polypeptide reads, in one-letter code: Trehalose transporter 1 (857 aa).

Disordered regions lie at residues 1 to 28 (MSGR…KLKE) and 62 to 202 (DPFL…QKAT). The Cytoplasmic segment spans residues 1–392 (MSGRDNRGAG…VYRPTTNPIY (392 aa)). At alanine 9 the chain carries Phosphothreonine. Phosphoserine is present on glycine 12. Positions 69–81 (VSPQRHPQNTVRT) are enriched in polar residues. Residues 134–143 (EIREHRDRQQ) show a composition bias toward basic and acidic residues. A compositionally biased stretch (polar residues) spans 171–181 (GNSNTNSNKAA). A phosphoserine mark is found at serine 248, serine 249, and serine 250. Disordered stretches follow at residues 249–269 (SSEE…HQSL) and 280–299 (VLQG…EHKR). Phosphoserine occurs at positions 320 and 322. Positions 327 to 346 (LTSRQHFQQQRSISTDSRKS) are disordered. The span at 330–341 (RQHFQQQRSIST) shows a compositional bias: polar residues. A helical transmembrane segment spans residues 393–413 (IWTQVLAALSVSLGSLVVGFV). Topologically, residues 414–440 (SAYTSPALVSMTDRNITSFEVTQDAGS) are extracellular. Asparagine 428 is a glycosylation site (N-linked (GlcNAc...) asparagine). A helical transmembrane segment spans residues 441 to 461 (WVGGIMPLAGLAGGIAGGPLI). The Cytoplasmic segment spans residues 462 to 473 (EYLGRRNTILAT). Residues 474–494 (AVPFIVSSLLIACAVNVAMVL) form a helical membrane-spanning segment. The Extracellular portion of the chain corresponds to 495–497 (CGR). A helical transmembrane segment spans residues 498 to 518 (FLAGFCVGIASLSLPVYLGET). The Cytoplasmic portion of the chain corresponds to 519–528 (VQPEVRGTLG). A helical membrane pass occupies residues 529–549 (LLPTAFGNIGILLCFVAGSFM). N-linked (GlcNAc...) asparagine glycosylation occurs at asparagine 550. Over 550 to 552 (NWS) the chain is Extracellular. The chain crosses the membrane as a helical span at residues 553–573 (MLAFLGAALPVPFLILMFLIP). The Cytoplasmic portion of the chain corresponds to 574-636 (ETPRWFVGRG…ELLKLNNLKP (63 aa)). A helical transmembrane segment spans residues 637–657 (LSISLGLMFFQQFSGINAVIF). The Extracellular segment spans residues 658 to 673 (YTVQIFKDAGSTIDGN). The chain crosses the membrane as a helical span at residues 674-694 (LCTIIVGIVNFLATFIGIVLI). Residues 695 to 700 (DRAGRK) are Cytoplasmic-facing. A helical membrane pass occupies residues 701 to 721 (ILLYVSDIAMVLTLFVLGGFF). Topologically, residues 722–740 (YCKTYGPDVSHLGWLPLTC) are extracellular. A helical membrane pass occupies residues 741-761 (FVIYILGFSLGFGPIPWLMMG). Over 762-767 (EILPAK) the chain is Cytoplasmic. Residues 768–788 (IRGSAASVATAFNWFCTFVVT) form a helical membrane-spanning segment. The Extracellular segment spans residues 789–801 (KTFQDLTVAMGAH). A helical transmembrane segment spans residues 802–822 (GAFWLFGAICFVGLFFVIIYV). Residues 823–857 (PETQGKTLEDIERKMMGRVRRMSSVANIKPLSFNM) are Cytoplasmic-facing. Serine 845 and serine 846 each carry phosphoserine.

Belongs to the major facilitator superfamily. Sugar transporter (TC 2.A.1.1) family. Trehalose transporter subfamily. In terms of tissue distribution, expressed in perineurial glia of the outer layer of the nervous system that forms the blood brain barrier (at protein level). Expressed in the fat body (at protein level). May be specifically expressed in perineurial glia (at protein level). As to expression, may be specifically expressed in the fat body (at protein level).

It localises to the cell membrane. The protein localises to the vesicle. The catalysed reaction is alpha,alpha-trehalose(in) = alpha,alpha-trehalose(out). It catalyses the reaction D-glucose(out) = D-glucose(in). In terms of biological role, low-capacity facilitative transporter for trehalose. Can also transport glucose. Does not transport maltose, sucrose, lactose or fructose. Mediates the bidirectional transfer of trehalose. Responsible for the transport of trehalose synthesized in the fat body and the incorporation of trehalose into other tissues that require a carbon source, thereby regulating trehalose levels in the hemolymph. Required in glial cells of the blood brain barrier to fuel glycolysis but not required in neurons. Neurons rely on the citric acid cycle for their energy needs and utilise alanine and lactate, by-products of glial cell glycolysis released into the hemolymph, as fuel. Increased expression in glial cells of the blood brain barrier during starvation and increased cell surface localization enhances carbohydrate uptake to protect the central nervous system from restricted nutrient availability. The polypeptide is Trehalose transporter 1 (Drosophila melanogaster (Fruit fly)).